The primary structure comprises 1100 residues: DNA-directed RNA polymerase subunit beta (1100 aa).

Residues 1064–1100 form a disordered region; that stretch reads YEEDKEVDLMADVNQRRTPSRPTYESMSVGDIDDDDD. Residues 1079 to 1089 show a composition bias toward polar residues; that stretch reads RRTPSRPTYES.

This sequence belongs to the RNA polymerase beta chain family. In terms of assembly, in cyanobacteria the RNAP catalytic core is composed of 2 alpha, 1 beta, 1 beta', 1 gamma and 1 omega subunit. When a sigma factor is associated with the core the holoenzyme is formed, which can initiate transcription.

It carries out the reaction RNA(n) + a ribonucleoside 5'-triphosphate = RNA(n+1) + diphosphate. DNA-dependent RNA polymerase catalyzes the transcription of DNA into RNA using the four ribonucleoside triphosphates as substrates. This is DNA-directed RNA polymerase subunit beta from Synechococcus sp. (strain ATCC 27144 / PCC 6301 / SAUG 1402/1) (Anacystis nidulans).